The chain runs to 456 residues: Toxin CfTX-1 (456 aa).

The signal sequence occupies residues 1–20; it reads MVKMLFFAFLPLLFMTGIAA.

The protein belongs to the jellyfish toxin family. Type I subfamily. In terms of assembly, oligomer. In terms of processing, contains disulfide bonds. Nematocytes.

The protein resides in the secreted. The protein localises to the nematocyst. It localises to the target cell membrane. Functionally, may cause profound effects on the cardiovascular system of anesthetized rats (at 25 ug/kg), since the fraction containing this toxin and CfTX-2 produces an initial increase in mean arterial pressure, followed by cardiovascular collapse in all animals within 1 minute of injection. To note, the same fraction does not induce significant change in heart rate. Has weak hemolytic activity. Is lethal to crayfish. Causes cutaneous inflammation in humans. May act as a pore-forming toxin, disrupting normal transmembrane ion concentration gradients in susceptible cells. The protein is Toxin CfTX-1 of Chironex fleckeri (Australian box jellyfish).